A 638-amino-acid polypeptide reads, in one-letter code: Probable glycerol-3-phosphate dehydrogenase, mitochondrial (638 aa).

FAD is bound at residue 100-128 (DLIVIGGGATGTGVALDAQSRGMKVALFE).

Belongs to the FAD-dependent glycerol-3-phosphate dehydrogenase family. The cofactor is FAD.

The protein localises to the mitochondrion. It catalyses the reaction a quinone + sn-glycerol 3-phosphate = dihydroxyacetone phosphate + a quinol. The protein operates within polyol metabolism; glycerol degradation via glycerol kinase pathway; glycerone phosphate from sn-glycerol 3-phosphate (anaerobic route): step 1/1. This is Probable glycerol-3-phosphate dehydrogenase, mitochondrial from Dictyostelium discoideum (Social amoeba).